Here is a 355-residue protein sequence, read N- to C-terminus: Peptide chain release factor 1 (355 aa).

Gln233 carries the post-translational modification N5-methylglutamine. A compositionally biased stretch (basic and acidic residues) spans 280–293; that stretch reads ERRKKEQERADSRR. Residues 280–308 are disordered; that stretch reads ERRKKEQERADSRRGQVGSGDRSERIRTY.

This sequence belongs to the prokaryotic/mitochondrial release factor family. In terms of processing, methylated by PrmC. Methylation increases the termination efficiency of RF1.

Its subcellular location is the cytoplasm. Its function is as follows. Peptide chain release factor 1 directs the termination of translation in response to the peptide chain termination codons UAG and UAA. This Rickettsia felis (strain ATCC VR-1525 / URRWXCal2) (Rickettsia azadi) protein is Peptide chain release factor 1.